Reading from the N-terminus, the 476-residue chain is Adenosylhomocysteinase (476 aa).

3 residues coordinate substrate: threonine 67, aspartate 142, and glutamate 202. 203-205 (TTT) lines the NAD(+) pocket. Residues lysine 232 and aspartate 236 each coordinate substrate. NAD(+)-binding positions include asparagine 237, 266-271 (GYGDVG), glutamate 289, asparagine 324, 345-347 (IGH), and asparagine 390.

This sequence belongs to the adenosylhomocysteinase family. The cofactor is NAD(+).

The protein resides in the cytoplasm. It carries out the reaction S-adenosyl-L-homocysteine + H2O = L-homocysteine + adenosine. It participates in amino-acid biosynthesis; L-homocysteine biosynthesis; L-homocysteine from S-adenosyl-L-homocysteine: step 1/1. Functionally, may play a key role in the regulation of the intracellular concentration of adenosylhomocysteine. The protein is Adenosylhomocysteinase of Synechococcus sp. (strain CC9311).